The following is a 179-amino-acid chain: Replication restart protein DnaT (179 aa).

The segment covering 151–168 has biased composition (polar residues); sequence SRSSNGGMPQRDINSVSE. Positions 151–179 are disordered; the sequence is SRSSNGGMPQRDINSVSEPDNHIPPGFRG.

It belongs to the DnaT family. In terms of assembly, homooligomerizes. Interacts with PriB. Component of the replication restart primosome. Primosome assembly occurs via a 'hand-off' mechanism. PriA binds to replication forks, subsequently PriB then DnaT bind; DnaT then displaces ssDNA to generate the helicase loading substrate.

Functionally, involved in the restart of stalled replication forks, which reloads the replicative helicase on sites other than the origin of replication. Can function in multiple replication restart pathways. Displaces ssDNA from a PriB-ssDNA complex. Probably forms a spiral filament on ssDNA. In Salmonella schwarzengrund (strain CVM19633), this protein is Replication restart protein DnaT.